We begin with the raw amino-acid sequence, 399 residues long: MTKMDHKIVKTSYDGDAVSVEWDGGASAKFDNIWLRDNCHCSECYYDATKQRLLNSCSIPDDIAPIKVDSSPTKLKIVWNHEEHQSEYECRWLVIHSYNPRQIPVTEKVSGEREILAREYWTVKDMEGRLPSVDFKTVMASTDENEEPIKDWCLKIWKHGFCFIDNVPVDPQETEKLCEKLMYIRPTHYGGFWDFTSDLSKNDTAYTNIDISSHTDGTYWSDTPGLQLFHLLMHEGTGGTTSLVDAFHCAEILKKEHPESFELLTRIPVPAHSAGEEKVCIQPDIPQPIFKLDTNGELIQVRWNQSDRSTMDSWENPSEVVKFYRAIKQWHKIISDPANELFYQLRPGQCLIFDNWRCFHSRTEFTGKRRMCGAYINRDDFVSRLNLLNIGRQPVLDAI.

His214, Asp216, and His360 together coordinate Fe cation.

The protein belongs to the gamma-BBH/TMLD family. The cofactor is Fe(2+). Requires L-ascorbate as cofactor.

Its subcellular location is the cytoplasm. The catalysed reaction is N(6),N(6),N(6)-trimethyl-L-lysine + 2-oxoglutarate + O2 = (3S)-3-hydroxy-N(6),N(6),N(6)-trimethyl-L-lysine + succinate + CO2. It functions in the pathway amine and polyamine biosynthesis; carnitine biosynthesis. Functionally, converts trimethyllysine (TML) into hydroxytrimethyllysine (HTML). The chain is Trimethyllysine dioxygenase from Meyerozyma guilliermondii (strain ATCC 6260 / CBS 566 / DSM 6381 / JCM 1539 / NBRC 10279 / NRRL Y-324) (Yeast).